The chain runs to 528 residues: Beta-hexosaminidase subunit alpha (528 aa).

An N-terminal signal peptide occupies residues 1–22 (MAGCRLWVSLLLAAALACLATA). The propeptide occupies 23–88 (LWPWPQYIQT…PRPSFSNKQQ (66 aa)). A disulfide bridge connects residues Cys58 and Cys104. N-linked (GlcNAc...) asparagine glycans are attached at residues Asn115, Asn157, and Asn295. Cys277 and Cys328 are disulfide-bonded. Catalysis depends on Glu323, which acts as the Proton donor. Residues 422 to 423 (NR) are critical for hydrolysis GM2 gangliosides. Asn487 is a glycosylation site (N-linked (GlcNAc...) asparagine). The cysteines at positions 504 and 521 are disulfide-linked.

Belongs to the glycosyl hydrolase 20 family. There are 3 beta-hexosaminidase isozymes: isozyme A (hexosaminidase A) is a heterodimer composed of one subunit alpha and one subunit beta (chain A and B); isozyme B (hexosaminidase B) is a homodimer of two beta subunits (two chains A and B); isozyme S (hexosaminidase S) is a homodimer of two alpha subunits. The composition of the dimer (isozyme A versus isozyme S) has a significant effect on the substrate specificity of the alpha subunit active site. Ubiquitous. Most abundant in testis, adrenal, epididymis and heart. Low levels seen in the liver.

It localises to the lysosome. The enzyme catalyses Hydrolysis of terminal non-reducing N-acetyl-D-hexosamine residues in N-acetyl-beta-D-hexosaminides.. It catalyses the reaction N-acetyl-beta-D-galactosaminyl-(1-&gt;4)-beta-D-3-sulfogalactosyl-(1-&gt;4)-beta-D-glucosyl-(1&lt;-&gt;1')-ceramide + H2O = a beta-D-3-sulfogalactosyl-(1-&gt;4)-beta-D-glucosyl-(1&lt;-&gt;1')-ceramide + N-acetyl-beta-D-galactosamine. The catalysed reaction is a ganglioside GM2 (d18:1(4E)) + H2O = a ganglioside GM3 (d18:1(4E)) + N-acetyl-beta-D-galactosamine. It carries out the reaction a ganglioside GM2 + H2O = a ganglioside GM3 + N-acetyl-beta-D-galactosamine. The enzyme catalyses beta-D-GalNAc-(1-&gt;4)-alpha-L-IdoA-(1-&gt;3)-beta-D-GalNAc-4-sulfate-(1-&gt;4)-alpha-L-IdoA-(1-&gt;3)-D-GalNAc-4-sulfate + H2O = alpha-L-IdoA-(1-&gt;3)-beta-D-GalNAc-4-sulfate-(1-&gt;4)-alpha-L-IdoA-(1-&gt;3)-D-GalNAc-4-sulfate + N-acetyl-D-galactosamine. It catalyses the reaction N-acetyl-beta-D-6-sulfogalactosaminyl-(1-&gt;4)-alpha-L-iduronyl-(1-&gt;3)-N-acetyl-D-6-sulfogalactosamine + H2O = alpha-L-iduronyl-(1-&gt;3)-N-acetyl-D-6-sulfogalactosamine + N-acetyl-D-6-sulfogalactosamine. Addition of GM2A stimulates the hydrolysis of sulfated glycosphingolipid SM2 and the ganglioside GM2. In terms of biological role, hydrolyzes the non-reducing end N-acetyl-D-hexosamine and/or sulfated N-acetyl-D-hexosamine of glycoconjugates, such as the oligosaccharide moieties from proteins and neutral glycolipids, or from certain mucopolysaccharides. The isozyme S is as active as the isozyme A on the anionic bis-sulfated glycans, the chondroitin-6-sulfate trisaccharide (C6S-3), and the dermatan sulfate pentasaccharide, and the sulfated glycosphingolipid SM2. The isozyme B does not hydrolyze each of these substrates, however hydrolyzes efficiently neutral oligosaccharide. Only the isozyme A is responsible for the degradation of GM2 gangliosides in the presence of GM2A. This chain is Beta-hexosaminidase subunit alpha, found in Mus musculus (Mouse).